A 183-amino-acid chain; its full sequence is TATA-box-binding protein (183 aa).

Repeat copies occupy residues 7–83 and 99–177.

Belongs to the TBP family.

General factor that plays a role in the activation of archaeal genes transcribed by RNA polymerase. Binds specifically to the TATA box promoter element which lies close to the position of transcription initiation. The protein is TATA-box-binding protein of Methanothrix thermoacetophila (strain DSM 6194 / JCM 14653 / NBRC 101360 / PT) (Methanosaeta thermophila).